We begin with the raw amino-acid sequence, 259 residues long: MQQMVPASGYDRAITIFSPEGRLYQVEYAREAVRRGTTAVGIKCKDGVVLAVDRRITSKLIDVSSIEKIFQIDDHIVAATSGLVADARVLIDRARIEAQMNRVSYGEAITVEALAKKICDIKQAYTQHGGARPFGLALLITGIDRHSARLFETDPSGALIEYKATAIGSGRPIAMEVLESKYDENMTVSEGMELALYALSKTTEELKPENIDMAIIKDSGKLVEKISVDEIEKIVKAVYEKVKAEEEEAEKNKGEEDSE.

Belongs to the peptidase T1A family. The 20S proteasome core is composed of 14 alpha and 14 beta subunits that assemble into four stacked heptameric rings, resulting in a barrel-shaped structure. The two inner rings, each composed of seven catalytic beta subunits, are sandwiched by two outer rings, each composed of seven alpha subunits. The catalytic chamber with the active sites is on the inside of the barrel. Has a gated structure, the ends of the cylinder being occluded by the N-termini of the alpha-subunits. Is capped at one or both ends by the proteasome regulatory ATPase, PAN.

Its subcellular location is the cytoplasm. Its activity is regulated as follows. The formation of the proteasomal ATPase PAN-20S proteasome complex, via the docking of the C-termini of PAN into the intersubunit pockets in the alpha-rings, triggers opening of the gate for substrate entry. Interconversion between the open-gate and close-gate conformations leads to a dynamic regulation of the 20S proteasome proteolysis activity. Component of the proteasome core, a large protease complex with broad specificity involved in protein degradation. The chain is Proteasome subunit alpha from Methanococcus maripaludis (strain DSM 14266 / JCM 13030 / NBRC 101832 / S2 / LL).